Here is a 159-residue protein sequence, read N- to C-terminus: NADH-quinone oxidoreductase subunit B (159 aa).

[4Fe-4S] cluster contacts are provided by Cys37, Cys38, Cys102, and Cys132.

It belongs to the complex I 20 kDa subunit family. NDH-1 is composed of 14 different subunits. Subunits NuoB, C, D, E, F, and G constitute the peripheral sector of the complex. Requires [4Fe-4S] cluster as cofactor.

The protein resides in the cell inner membrane. It carries out the reaction a quinone + NADH + 5 H(+)(in) = a quinol + NAD(+) + 4 H(+)(out). NDH-1 shuttles electrons from NADH, via FMN and iron-sulfur (Fe-S) centers, to quinones in the respiratory chain. The immediate electron acceptor for the enzyme in this species is believed to be ubiquinone. Couples the redox reaction to proton translocation (for every two electrons transferred, four hydrogen ions are translocated across the cytoplasmic membrane), and thus conserves the redox energy in a proton gradient. In Variovorax paradoxus (strain S110), this protein is NADH-quinone oxidoreductase subunit B.